Consider the following 242-residue polypeptide: Biosynthetic peptidoglycan transglycosylase (242 aa).

The helical transmembrane segment at Leu19 to Val39 threads the bilayer.

It belongs to the glycosyltransferase 51 family.

The protein resides in the cell inner membrane. It catalyses the reaction [GlcNAc-(1-&gt;4)-Mur2Ac(oyl-L-Ala-gamma-D-Glu-L-Lys-D-Ala-D-Ala)](n)-di-trans,octa-cis-undecaprenyl diphosphate + beta-D-GlcNAc-(1-&gt;4)-Mur2Ac(oyl-L-Ala-gamma-D-Glu-L-Lys-D-Ala-D-Ala)-di-trans,octa-cis-undecaprenyl diphosphate = [GlcNAc-(1-&gt;4)-Mur2Ac(oyl-L-Ala-gamma-D-Glu-L-Lys-D-Ala-D-Ala)](n+1)-di-trans,octa-cis-undecaprenyl diphosphate + di-trans,octa-cis-undecaprenyl diphosphate + H(+). Its pathway is cell wall biogenesis; peptidoglycan biosynthesis. Its function is as follows. Peptidoglycan polymerase that catalyzes glycan chain elongation from lipid-linked precursors. The polypeptide is Biosynthetic peptidoglycan transglycosylase (Shigella boydii serotype 4 (strain Sb227)).